Consider the following 243-residue polypeptide: NifU-like scaffold protein (243 aa).

Belongs to the NifU family. In terms of assembly, homodimer.

The protein resides in the plastid. The protein localises to the apicoplast. The protein operates within cofactor biosynthesis; iron-sulfur cluster biosynthesis. Functionally, binds and transfers [4Fe-4S] iron-sulfur clusters to target proteins. This is NifU-like scaffold protein from Plasmodium berghei (strain Anka).